Here is a 595-residue protein sequence, read N- to C-terminus: Elongation factor 4 (595 aa).

The tr-type G domain occupies 2-183; the sequence is KNIRNFCIIA…AIVEQVPAPA (182 aa). GTP contacts are provided by residues 14–19 and 130–133; these read DHGKST and NKVD.

It belongs to the TRAFAC class translation factor GTPase superfamily. Classic translation factor GTPase family. LepA subfamily.

It is found in the cell inner membrane. It catalyses the reaction GTP + H2O = GDP + phosphate + H(+). Its function is as follows. Required for accurate and efficient protein synthesis under certain stress conditions. May act as a fidelity factor of the translation reaction, by catalyzing a one-codon backward translocation of tRNAs on improperly translocated ribosomes. Back-translocation proceeds from a post-translocation (POST) complex to a pre-translocation (PRE) complex, thus giving elongation factor G a second chance to translocate the tRNAs correctly. Binds to ribosomes in a GTP-dependent manner. This chain is Elongation factor 4, found in Porphyromonas gingivalis (strain ATCC BAA-308 / W83).